A 178-amino-acid polypeptide reads, in one-letter code: Large ribosomal subunit protein uL6 (178 aa).

It belongs to the universal ribosomal protein uL6 family. As to quaternary structure, part of the 50S ribosomal subunit.

This protein binds to the 23S rRNA, and is important in its secondary structure. It is located near the subunit interface in the base of the L7/L12 stalk, and near the tRNA binding site of the peptidyltransferase center. The sequence is that of Large ribosomal subunit protein uL6 from Helicobacter pylori (strain J99 / ATCC 700824) (Campylobacter pylori J99).